A 553-amino-acid chain; its full sequence is Transcriptional regulator HilA (553 aa).

The ompR/PhoB-type DNA-binding region spans 11–107; sequence NKKFVFDDFI…LYGQGYRFNR (97 aa). Position 62 is a 4-aspartylphosphate (D62). The TPR repeat unit spans residues 372–405; that stretch reads ADIKYYYGWNLFMAGQLEEALQTINECLKLDPTR.

The main transcriptional regulator of the Salmonella pathogenicity island 1 (SPI1) gene expression. Activates the expression of invasion genes by a direct action at their promoters and also indirectly by increasing the level of invF. Also binds upstream of prgH and directly activates the expression of prgHIJK operon. This chain is Transcriptional regulator HilA (hilA), found in Salmonella typhi.